The sequence spans 314 residues: Leucine-rich repeat-containing protein 59 (314 aa).

Over 1 to 247 (MNKGKIENIK…VPKAKRSICS (247 aa)) the chain is Cytoplasmic. LRR repeat units lie at residues 14-35 (DGNE…ELAA), 38-60 (KATF…CSLT), 61-82 (HLIK…IGQL), 84-106 (NLQH…SQLK), and 107-126 (SLKW…AKAA). Residues 146-216 (MKVLQEEAEK…AVAAQEQQKK (71 aa)) are a coiled coil. Disordered stretches follow at residues 165–197 (REQE…KERK) and 212–237 (EQQK…APES). A compositionally biased stretch (basic residues) spans 215 to 225 (KKKKEEKKKKA). A helical transmembrane segment spans residues 248–268 (LFFSLLLKLVLLLVIGVSSVV). Over 269–314 (AVCQLTELRKEAFCIPLNVHFEETVRWAQGLDVVQQVIQKMSDLRT) the chain is Lumenal.

Interacts with SGO1.

Its subcellular location is the microsome membrane. The protein resides in the endoplasmic reticulum membrane. It localises to the nucleus envelope. Its function is as follows. Required for nuclear import of FGF1. This Danio rerio (Zebrafish) protein is Leucine-rich repeat-containing protein 59 (lrrc59).